Here is a 634-residue protein sequence, read N- to C-terminus: 1-deoxy-D-xylulose-5-phosphate synthase (634 aa).

Residues H74 and 115–117 (AHS) each bind thiamine diphosphate. D146 contacts Mg(2+). Thiamine diphosphate is bound by residues 147-148 (GA), N176, Y283, and E365. N176 is a binding site for Mg(2+).

It belongs to the transketolase family. DXPS subfamily. As to quaternary structure, homodimer. Mg(2+) is required as a cofactor. The cofactor is thiamine diphosphate.

It catalyses the reaction D-glyceraldehyde 3-phosphate + pyruvate + H(+) = 1-deoxy-D-xylulose 5-phosphate + CO2. The protein operates within metabolic intermediate biosynthesis; 1-deoxy-D-xylulose 5-phosphate biosynthesis; 1-deoxy-D-xylulose 5-phosphate from D-glyceraldehyde 3-phosphate and pyruvate: step 1/1. Its function is as follows. Catalyzes the acyloin condensation reaction between C atoms 2 and 3 of pyruvate and glyceraldehyde 3-phosphate to yield 1-deoxy-D-xylulose-5-phosphate (DXP). The sequence is that of 1-deoxy-D-xylulose-5-phosphate synthase from Burkholderia ambifaria (strain MC40-6).